Consider the following 161-residue polypeptide: Regulator of ribonuclease activity A (161 aa).

The protein belongs to the RraA family. As to quaternary structure, homotrimer. Binds to both RNA-binding sites in the C-terminal region of Rne and to RhlB.

The protein localises to the cytoplasm. Its function is as follows. Globally modulates RNA abundance by binding to RNase E (Rne) and regulating its endonucleolytic activity. Can modulate Rne action in a substrate-dependent manner by altering the composition of the degradosome. Modulates RNA-binding and helicase activities of the degradosome. The sequence is that of Regulator of ribonuclease activity A from Shewanella sediminis (strain HAW-EB3).